A 506-amino-acid chain; its full sequence is Maturase K (506 aa).

This sequence belongs to the intron maturase 2 family. MatK subfamily.

Its subcellular location is the plastid. It is found in the chloroplast. Functionally, usually encoded in the trnK tRNA gene intron. Probably assists in splicing its own and other chloroplast group II introns. The chain is Maturase K from Rhododendron tomentosum (Marsh Labrador tea).